Here is a 798-residue protein sequence, read N- to C-terminus: Vacuolar protein sorting-associated protein 53 homolog (798 aa).

Belongs to the VPS53 family. Component of the Golgi-associated retrograde protein (GARP) complex, also called VFT (VPS fifty-three) complex, composed of vps-51, vps-52, vps-53 and vps-54. Within the complex interacts with vps-51, vps-52 and vps-54. As to expression, ubiquitously expressed, with particularly strong expression in neuronal cells. Specifically expressed in head and tail neurons and in the pharynx and ventral cord motor neurons.

It localises to the golgi apparatus. It is found in the trans-Golgi network membrane. The protein resides in the endosome membrane. Its subcellular location is the perikaryon. The protein localises to the cytoplasm. It localises to the perinuclear region. Its function is as follows. Acts as a component of the GARP complex that is involved in retrograde transport from early and late endosomes to the trans-Golgi network (TGN). The GARP complex facilitates tethering as well as SNARE complex assembly at the Golgi. Plays a role in the trafficking of cargo to dense-core vesicles, probably through association with the EARP-interacting protein eipr-1. Important for neuronal function. The polypeptide is Vacuolar protein sorting-associated protein 53 homolog (Caenorhabditis elegans).